A 398-amino-acid chain; its full sequence is KiSS-1 receptor (398 aa).

Residues 1–46 (MHTVATSGPNASWGAPANASGCPGCGANASDGPVPSPRAVDAWLVP) lie on the Extracellular side of the membrane. N10, N18, and N28 each carry an N-linked (GlcNAc...) asparagine glycan. Residues 47-67 (LFFAALMLLGLVGNSLVIYVI) form a helical membrane-spanning segment. Residues 68-78 (CRHKPMRTVTN) are Cytoplasmic-facing. Residues 79–101 (FYIANLAATDVTFLLCCVPFTAL) traverse the membrane as a helical segment. Topologically, residues 102 to 120 (LYPLPGWVLGDFMCKFVNY) are extracellular. C115 and C191 are oxidised to a cystine. A helical transmembrane segment spans residues 121 to 138 (IQQVSVQATCATLTAMSV). Residues 139-157 (DRWYVTVFPLRALHRRTPR) are Cytoplasmic-facing. A helical transmembrane segment spans residues 158–178 (LALAVSLSIWVGSAAVSAPVL). Residues 179–202 (ALHRLSPGPRAYCSEAFPSRALER) lie on the Extracellular side of the membrane. Residues 203-223 (AFALYNLLALYLLPLLATCAC) traverse the membrane as a helical segment. Residues 224-263 (YAAMLRHLGRVAVRPAPADSALQGQVLAERAGAVRAKVSR) lie on the Cytoplasmic side of the membrane. A helical membrane pass occupies residues 264-284 (LVAAVVLLFAACWGPIQLFLV). The Extracellular segment spans residues 285 to 305 (LQALGPAGSWHPRSYAAYALK). The helical transmembrane segment at 306 to 328 (TWAHCMSYSNSALNPLLYAFLGS) threads the bilayer. Topologically, residues 329 to 398 (HFRQAFRRVC…CVLGEDNAPL (70 aa)) are cytoplasmic. Residues 341–363 (APRRPRRPRRPGPSDPAAPHAEL) form a disordered region.

This sequence belongs to the G-protein coupled receptor 1 family. In terms of tissue distribution, most highly expressed in the pancreas, placenta and spinal cord, with lower-level of expression in peripheral blood leukocytes, kidney, lung, fetal liver, stomach, small intestine, testes, spleen, thymus, adrenal glands and lymph nodes. In the adult brain, expressed in the superior frontal gyrus, putamen, caudate nucleus, cingulate gyrus, nucleus accumbens, hippocampus, pons and amygdala, as well as the hypothalamus and pituitary. Expression levels are higher in early (7-9 weeks) than term placentas. Expression levels were increased in both early placentas and molar pregnancies and were reduced in choriocarcinoma cells. Expressed at higher levels in first trimester trophoblasts than at term of gestation. Also found in the extravillous trophoblast suggesting endocrine/paracrine activation mechanism.

The protein localises to the cell membrane. Its function is as follows. Receptor for metastin (kisspeptin-54 or kp-54), a C-terminally amidated peptide of KiSS1. KiSS1 is a metastasis suppressor protein that suppresses metastases in malignant melanomas and in some breast carcinomas without affecting tumorigenicity. The metastasis suppressor properties may be mediated in part by cell cycle arrest and induction of apoptosis in malignant cells. The receptor is essential for normal gonadotropin-released hormone physiology and for puberty. The hypothalamic KiSS1/KISS1R system is a pivotal factor in central regulation of the gonadotropic axis at puberty and in adulthood. The receptor is also probably involved in the regulation and fine-tuning of trophoblast invasion generated by the trophoblast itself. Analysis of the transduction pathways activated by the receptor identifies coupling to phospholipase C and intracellular calcium release through pertussis toxin-insensitive G(q) proteins. This chain is KiSS-1 receptor (KISS1R), found in Homo sapiens (Human).